We begin with the raw amino-acid sequence, 200 residues long: Adenine phosphoribosyltransferase (200 aa).

It belongs to the purine/pyrimidine phosphoribosyltransferase family. Homodimer.

It localises to the cytoplasm. It carries out the reaction AMP + diphosphate = 5-phospho-alpha-D-ribose 1-diphosphate + adenine. Its pathway is purine metabolism; AMP biosynthesis via salvage pathway; AMP from adenine: step 1/1. Catalyzes a salvage reaction resulting in the formation of AMP, that is energically less costly than de novo synthesis. This is Adenine phosphoribosyltransferase from Sorangium cellulosum (strain So ce56) (Polyangium cellulosum (strain So ce56)).